The chain runs to 319 residues: tRNA uridine(34) hydroxylase (319 aa).

The Rhodanese domain occupies 124–218; sequence LDEDTVILDA…YGKNEETKGE (95 aa). Cysteine 178 functions as the Cysteine persulfide intermediate in the catalytic mechanism.

The protein belongs to the TrhO family.

The catalysed reaction is uridine(34) in tRNA + AH2 + O2 = 5-hydroxyuridine(34) in tRNA + A + H2O. Its function is as follows. Catalyzes oxygen-dependent 5-hydroxyuridine (ho5U) modification at position 34 in tRNAs. This Listeria welshimeri serovar 6b (strain ATCC 35897 / DSM 20650 / CCUG 15529 / CIP 8149 / NCTC 11857 / SLCC 5334 / V8) protein is tRNA uridine(34) hydroxylase.